The primary structure comprises 380 residues: Protein kinase ORF15 (380 aa).

The region spanning 93–371 (FIPVKVAGCL…LLIAQLTKFI (279 aa)) is the Protein kinase domain. An ATP-binding site is contributed by Lys-118. Residue Asp-217 is the Proton acceptor of the active site.

This sequence belongs to the protein kinase superfamily. Ser/Thr protein kinase family.

It catalyses the reaction L-seryl-[protein] + ATP = O-phospho-L-seryl-[protein] + ADP + H(+). The catalysed reaction is L-threonyl-[protein] + ATP = O-phospho-L-threonyl-[protein] + ADP + H(+). The chain is Protein kinase ORF15 (ORF15) from Ictalurid herpesvirus 1 (strain Auburn) (IcHV-1).